Here is a 468-residue protein sequence, read N- to C-terminus: MLPKKKLHMKVGILDSTLREGEQTPGVVFTTDQRVEIAKALSDIGVQMIEAGHPAVSPDIYEGIRRIIKLKREGVIKSEIVAHSRAVKRDIEVGAEIEADRIAIFYGISDTHLKAKHHTTRDEALRSIAETVSYAKSHGVKVRFTAEDATRADYQYLLEVIKTVRDAGADRVSIADTVGVLYPSRTRELFKDLTSRFPDIEFDIHAHNDLGMAVANVLAAAEGGATIIHTTLNGLGERVGIAPLQVVAAALKYHFGIEVVDLKKLSEVASLVEKYSGIALPPNFPITGDYAFVHKAGVHVAGVLNDPKTYEFLPPETFGRSRDYVIDKYTGKHAVKDRFDRLGVKLTDSEIDQVLAKIKSNPNVRFYRDVDLLELAESVTGRILKPRPPENIMALISVKCDSNVYTTSVTRRIVLIEGVREVMEISGDYDILVKVEAKDSTELNQIIESIRAVKGVKSTLTSLILKKM.

The Pyruvate carboxyltransferase domain maps to 11 to 266 (VGILDSTLRE…IEVVDLKKLS (256 aa)). Residue arginine 19 coordinates 2-oxoglutarate. A Mg(2+)-binding site is contributed by glutamate 20. 2-oxoglutarate contacts are provided by histidine 83, arginine 143, and threonine 177. Histidine 205 and histidine 207 together coordinate Mg(2+). The Proton acceptor role is filled by histidine 299.

Belongs to the alpha-IPM synthase/homocitrate synthase family. Homocitrate synthase LYS20/LYS21 subfamily. It depends on Mg(2+) as a cofactor. The cofactor is Mn(2+).

It carries out the reaction acetyl-CoA + 2-oxoglutarate + H2O = (2R)-homocitrate + CoA + H(+). Its pathway is amino-acid biosynthesis; L-lysine biosynthesis via AAA pathway; L-alpha-aminoadipate from 2-oxoglutarate: step 1/5. Its activity is regulated as follows. Inhibited by lysine. Functionally, catalyzes the aldol-type condensation of 2-oxoglutarate with acetyl-CoA to yield homocitrate. Carries out the first step of the alpha-aminoadipate (AAA) lysine biosynthesis pathway. Does not display 2-isopropylmalate synthase and citramalate synthase activities since it cannot use 2-oxoisovalerate or pyruvate as substrate. The protein is Homocitrate synthase of Sulfolobus acidocaldarius (strain ATCC 33909 / DSM 639 / JCM 8929 / NBRC 15157 / NCIMB 11770).